A 345-amino-acid chain; its full sequence is MVAALLGGGGEARGGTVPGAWLCLMALLQLLGSAPRGSGLAHGRRLICWQALLQCQGEPECSYAYNQYAEACAPVLAQHGGGDAPGAAAAAFPASAASFSSRWRCPSHCISALIQLNHTRRGPALEDCDCAQDENCKSTKRAIEPCLPRTSGGGAGGPGAGGVMGCTEARRRCDRDSRCNLALSRYLTYCGKVFNGLRCTDECRTVIEDMLAMPKAALLNDCVCDGLERPICESVKENMARLCFGAELGNGPGSSGSDGGLDDYYDEDYDDEQRTGGAGGEQPLDDDDGVPHPPRPGSGAAASGGRGDLPYGPGRRSSGGGGRLAPRGAWTPLASILLLLLGPLF.

The signal sequence occupies residues 1-39 (MVAALLGGGGEARGGTVPGAWLCLMALLQLLGSAPRGSG). A glycan (N-linked (GlcNAc...) asparagine) is linked at N117. The segment at 254–328 (SSGSDGGLDD…GGGGRLAPRG (75 aa)) is disordered. Acidic residues predominate over residues 260 to 271 (GLDDYYDEDYDD). The GPI-anchor amidated serine moiety is linked to residue S318. The propeptide at 319 to 345 (GGGGRLAPRGAWTPLASILLLLLGPLF) is removed in mature form.

The protein localises to the cell membrane. In terms of biological role, specific growth arrest protein involved in growth suppression. Blocks entry to S phase. Prevents cycling of normal and transformed cells. Binds 20(S)-hydroxycholesterol (20(S)-OHC). The polypeptide is Growth arrest-specific protein 1 (GAS1) (Homo sapiens (Human)).